A 553-amino-acid chain; its full sequence is Expansin-like protein 7 (553 aa).

The signal sequence occupies residues 1–19; it reads MRLLGSLILTLSLIASAFS. Asn39 carries N-linked (GlcNAc...) asparagine glycosylation. The Expansin-like EG45 domain maps to 41-139; that stretch reads SGSCEYGAYN…RKVSCDASGP (99 aa). 2 disulfides stabilise this stretch: Cys44–Cys73 and Cys76–Cys134. 3 N-linked (GlcNAc...) asparagine glycosylation sites follow: Asn276, Asn325, and Asn406. Disordered regions lie at residues 421–447 and 460–531; these read GGSGASGVATSSHTGVSSSSSTASSTA and SSSA…DEHH. Composition is skewed to low complexity over residues 460-476 and 484-493; these read SSSASSTSVSSTTAGGK and ISTSGITGSG. Over residues 497-516 the composition is skewed to polar residues; sequence AASTSKTTSNPTGKTTGMTG. Residues 520–531 are compositionally biased toward basic and acidic residues; it reads DHSESHSSDEHH.

This sequence belongs to the expansin family. Expansin A subfamily.

The protein resides in the secreted. May serve to lubricate the movement of the cellulose microfibrils during cell growth and wall extension and/or may serve to maintain the fluid state of the slug cell wall. Overexpression shows aberrant stalk formation. This chain is Expansin-like protein 7 (expl7), found in Dictyostelium discoideum (Social amoeba).